The chain runs to 712 residues: Glycine--tRNA ligase beta subunit (712 aa).

It belongs to the class-II aminoacyl-tRNA synthetase family. Tetramer of two alpha and two beta subunits.

It localises to the cytoplasm. The enzyme catalyses tRNA(Gly) + glycine + ATP = glycyl-tRNA(Gly) + AMP + diphosphate. This is Glycine--tRNA ligase beta subunit from Dechloromonas aromatica (strain RCB).